The following is a 208-amino-acid chain: Golgi apparatus membrane protein TVP23 homolog B (208 aa).

Residue methionine 1 is modified to N-acetylmethionine. Over residues 1 to 21 (MLQQDSNDDTEDVSLFDAEEE) the composition is skewed to acidic residues. The tract at residues 1–27 (MLQQDSNDDTEDVSLFDAEEETTNRPK) is disordered. A run of 4 helical transmembrane segments spans residues 34 to 53 (PVASFFHLFFRVSAIIVYLL), 54 to 72 (CELFSSSFIACMVTIILLL), 126 to 146 (IFWLGLVACPVLWVVFAFSAL), and 152 to 172 (KWLAVVIMGVVLQGANLYGYI).

Belongs to the TVP23 family.

Its subcellular location is the membrane. The sequence is that of Golgi apparatus membrane protein TVP23 homolog B (TVP23B) from Bos taurus (Bovine).